A 463-amino-acid chain; its full sequence is uncharacterized protein (463 aa).

It belongs to the mycobacterial PPE family.

This is an uncharacterized protein from Mycobacterium tuberculosis (strain CDC 1551 / Oshkosh).